Reading from the N-terminus, the 167-residue chain is EF-hand calcium-binding domain-containing protein 11 (167 aa).

3 EF-hand domains span residues 17–52 (AERKKIELVFHQCDVDKKGYMSREDLKIAVVMLFGY), 91–126 (DPYEKARQIFSAFDVHCRGFLKLDDFKSAFKRVAPR), and 127–162 (LQERTVLEAFRHADQDSDGHISFKDFENIISYGLAN). Positions 140, 142, 144, 146, and 151 each coordinate Ca(2+).

This is EF-hand calcium-binding domain-containing protein 11 (efcab11) from Danio rerio (Zebrafish).